A 254-amino-acid polypeptide reads, in one-letter code: uncharacterized protein (254 aa).

Belongs to the methyltransferase superfamily.

This is an uncharacterized protein from Mycobacterium bovis (strain ATCC BAA-935 / AF2122/97).